The primary structure comprises 526 residues: Peptide chain release factor 3 (526 aa).

Positions 9–277 constitute a tr-type G domain; the sequence is DKRRTFAIIS…GIVEWAPKPL (269 aa). GTP-binding positions include 18–25, 86–90, and 140–143; these read SHPDAGKT, DTPGH, and NKLD.

Belongs to the TRAFAC class translation factor GTPase superfamily. Classic translation factor GTPase family. PrfC subfamily.

It localises to the cytoplasm. Increases the formation of ribosomal termination complexes and stimulates activities of RF-1 and RF-2. It binds guanine nucleotides and has strong preference for UGA stop codons. It may interact directly with the ribosome. The stimulation of RF-1 and RF-2 is significantly reduced by GTP and GDP, but not by GMP. This chain is Peptide chain release factor 3, found in Shewanella sp. (strain ANA-3).